The primary structure comprises 606 residues: Serine/threonine-protein kinase A-Raf (606 aa).

An RBD domain is found at 19-91; that stretch reads GTVKVYLPNK…DGEELIVEVL (73 aa). The Phorbol-ester/DAG-type zinc-finger motif lies at 98–144; sequence MHNFVRKTFFSLAFCDFCLKFLFHGFRCQTCGYKFHQHCSSKVPTVC. His99, Cys112, Cys115, Cys125, Cys128, His133, Cys136, and Cys144 together coordinate Zn(2+). Residues Ser157 and Ser162 each carry the phosphoserine modification. 2 disordered regions span residues 158 to 207 and 241 to 290; these read VQDL…NAPL and TDAA…DKKK. The residue at position 181 (Thr181) is a Phosphothreonine. Phosphoserine occurs at positions 186, 257, and 269. Residues 254 to 267 are compositionally biased toward low complexity; the sequence is PRGSPSPASVSSGR. Residues 274 to 289 show a composition bias toward basic and acidic residues; that stretch reads SPSEQRERKSLADDKK. Residues 310–570 form the Protein kinase domain; the sequence is VQLLKRIGTG…PQILATIELL (261 aa). ATP-binding positions include 316 to 324 and Lys336; that span reads IGTGSFGTV. Thr318 carries the post-translational modification Phosphothreonine. Residue Asp429 is the Proton acceptor of the active site.

This sequence belongs to the protein kinase superfamily. TKL Ser/Thr protein kinase family. RAF subfamily. Interacts with TH1L/NELFD. Requires Zn(2+) as cofactor. Post-translationally, dephosphorylation by the SHOC2-MRAS-PP1c (SMP) complex consisting of SHOC2, GTP-bound M-Ras/MRAS and the catalytic subunit of protein phosphatase 1 (PPP1CA, PPP1CB or PPP1CC); this relieves inactivation and stimulates kinase activity.

It catalyses the reaction L-seryl-[protein] + ATP = O-phospho-L-seryl-[protein] + ADP + H(+). The catalysed reaction is L-threonyl-[protein] + ATP = O-phospho-L-threonyl-[protein] + ADP + H(+). Functionally, involved in the transduction of mitogenic signals from the cell membrane to the nucleus. May also regulate the TOR signaling cascade. Phosphorylates PFKFB2. This is Serine/threonine-protein kinase A-Raf (ARAF) from Sus scrofa (Pig).